We begin with the raw amino-acid sequence, 604 residues long: Membrane protein insertase YidC (604 aa).

A helical transmembrane segment spans residues 8 to 28 (LYLAIGLSLLVLIGWNYFFAG). The interval 42 to 84 (EQQAQTQTTSDTTARSDLNVPGQRSLPGESPQTQLSRPEALAA) is disordered. A compositionally biased stretch (low complexity) spans 43–58 (QQAQTQTTSDTTARSD). Transmembrane regions (helical) follow at residues 349–369 (FDLL…FWIL), 375–395 (VVGN…AVFF), 449–469 (LPML…FVTI), 507–527 (MIGH…SMFF), and 546–566 (WMPV…VIYW).

Belongs to the OXA1/ALB3/YidC family. Type 1 subfamily. As to quaternary structure, interacts with the Sec translocase complex via SecD. Specifically interacts with transmembrane segments of nascent integral membrane proteins during membrane integration.

Its subcellular location is the cell inner membrane. Its function is as follows. Required for the insertion and/or proper folding and/or complex formation of integral membrane proteins into the membrane. Involved in integration of membrane proteins that insert both dependently and independently of the Sec translocase complex, as well as at least some lipoproteins. Aids folding of multispanning membrane proteins. This Beijerinckia indica subsp. indica (strain ATCC 9039 / DSM 1715 / NCIMB 8712) protein is Membrane protein insertase YidC.